A 346-amino-acid chain; its full sequence is Protein RecA (346 aa).

Position 67–74 (67–74 (GPESSGKT)) interacts with ATP.

Belongs to the RecA family.

It localises to the cytoplasm. Its function is as follows. Can catalyze the hydrolysis of ATP in the presence of single-stranded DNA, the ATP-dependent uptake of single-stranded DNA by duplex DNA, and the ATP-dependent hybridization of homologous single-stranded DNAs. It interacts with LexA causing its activation and leading to its autocatalytic cleavage. The protein is Protein RecA of Saccharopolyspora erythraea (strain ATCC 11635 / DSM 40517 / JCM 4748 / NBRC 13426 / NCIMB 8594 / NRRL 2338).